The primary structure comprises 803 residues: Phenylalanine--tRNA ligase beta subunit (803 aa).

Residues 40 to 150 enclose the tRNA-binding domain; sequence SNKFYGIVIA…IDAPIGCNFY (111 aa). The 76-residue stretch at 405–480 folds into the B5 domain; it reads PKIKIIKLHR…RIYGYNHIPK (76 aa). Mg(2+)-binding residues include D458 and E468. The region spanning 710–803 is the FDX-ACB domain; that stretch reads SKFPKNYRDI…LKKHFNAIFR (94 aa).

It belongs to the phenylalanyl-tRNA synthetase beta subunit family. Type 1 subfamily. In terms of assembly, tetramer of two alpha and two beta subunits. Requires Mg(2+) as cofactor.

The protein localises to the cytoplasm. The catalysed reaction is tRNA(Phe) + L-phenylalanine + ATP = L-phenylalanyl-tRNA(Phe) + AMP + diphosphate + H(+). This Blochmanniella floridana protein is Phenylalanine--tRNA ligase beta subunit.